Here is a 530-residue protein sequence, read N- to C-terminus: tRNA-2-methylthio-N(6)-dimethylallyladenosine synthase (530 aa).

An MTTase N-terminal domain is found at 19–134; it reads RTYEVRTYGC…LPTLLERARH (116 aa). [4Fe-4S] cluster is bound by residues Cys28, Cys63, Cys97, Cys171, Cys175, and Cys178. Residues 157–387 form the Radical SAM core domain; sequence RDEIASGWVS…TALQERISHE (231 aa). The region spanning 390 to 460 is the TRAM domain; sequence QRVVGRTVEV…PFHLIADSVD (71 aa). A disordered region spans residues 509–530; it reads VPTTASTSAPVGDGSAHPRHRA.

The protein belongs to the methylthiotransferase family. MiaB subfamily. Monomer. The cofactor is [4Fe-4S] cluster.

It is found in the cytoplasm. The catalysed reaction is N(6)-dimethylallyladenosine(37) in tRNA + (sulfur carrier)-SH + AH2 + 2 S-adenosyl-L-methionine = 2-methylsulfanyl-N(6)-dimethylallyladenosine(37) in tRNA + (sulfur carrier)-H + 5'-deoxyadenosine + L-methionine + A + S-adenosyl-L-homocysteine + 2 H(+). Catalyzes the methylthiolation of N6-(dimethylallyl)adenosine (i(6)A), leading to the formation of 2-methylthio-N6-(dimethylallyl)adenosine (ms(2)i(6)A) at position 37 in tRNAs that read codons beginning with uridine. In Clavibacter sepedonicus (Clavibacter michiganensis subsp. sepedonicus), this protein is tRNA-2-methylthio-N(6)-dimethylallyladenosine synthase.